A 96-amino-acid chain; its full sequence is Co-chaperonin GroES (96 aa).

The protein belongs to the GroES chaperonin family. Heptamer of 7 subunits arranged in a ring. Interacts with the chaperonin GroEL.

Its subcellular location is the cytoplasm. Functionally, together with the chaperonin GroEL, plays an essential role in assisting protein folding. The GroEL-GroES system forms a nano-cage that allows encapsulation of the non-native substrate proteins and provides a physical environment optimized to promote and accelerate protein folding. GroES binds to the apical surface of the GroEL ring, thereby capping the opening of the GroEL channel. The polypeptide is Co-chaperonin GroES (Actinobacillus succinogenes (strain ATCC 55618 / DSM 22257 / CCUG 43843 / 130Z)).